The following is a 480-amino-acid chain: Ribulose bisphosphate carboxylase large chain (480 aa).

Positions 1 to 2 (MS) are excised as a propeptide. Proline 3 carries the N-acetylproline modification. Lysine 14 carries the post-translational modification N6,N6,N6-trimethyllysine. 2 residues coordinate substrate: asparagine 123 and threonine 173. Lysine 175 functions as the Proton acceptor in the catalytic mechanism. Lysine 177 is a binding site for substrate. Mg(2+)-binding residues include lysine 201, aspartate 203, and glutamate 204. An N6-carboxylysine modification is found at lysine 201. Residue histidine 294 is the Proton acceptor of the active site. Residues arginine 295, histidine 327, and serine 379 each contribute to the substrate site.

This sequence belongs to the RuBisCO large chain family. Type I subfamily. As to quaternary structure, heterohexadecamer of 8 large chains and 8 small chains; disulfide-linked. The disulfide link is formed within the large subunit homodimers. Requires Mg(2+) as cofactor. Post-translationally, the disulfide bond which can form in the large chain dimeric partners within the hexadecamer appears to be associated with oxidative stress and protein turnover.

It localises to the plastid. Its subcellular location is the chloroplast. The enzyme catalyses 2 (2R)-3-phosphoglycerate + 2 H(+) = D-ribulose 1,5-bisphosphate + CO2 + H2O. The catalysed reaction is D-ribulose 1,5-bisphosphate + O2 = 2-phosphoglycolate + (2R)-3-phosphoglycerate + 2 H(+). Its function is as follows. RuBisCO catalyzes two reactions: the carboxylation of D-ribulose 1,5-bisphosphate, the primary event in carbon dioxide fixation, as well as the oxidative fragmentation of the pentose substrate in the photorespiration process. Both reactions occur simultaneously and in competition at the same active site. The polypeptide is Ribulose bisphosphate carboxylase large chain (Basella alba (Malabar spinach)).